A 210-amino-acid chain; its full sequence is HTH-type transcriptional repressor FabR (210 aa).

The region spanning 10 to 70 (KTRRSLVEAA…TMVDESGLML (61 aa)) is the HTH tetR-type domain. Positions 33-52 (SLREVAREAGIAPTSFYRHF) form a DNA-binding region, H-T-H motif.

In terms of assembly, homodimer.

The protein localises to the cytoplasm. Represses the transcription of fabB, involved in unsaturated fatty acid (UFA) biosynthesis. By controlling UFA production, FabR directly influences the physical properties of the membrane bilayer. The polypeptide is HTH-type transcriptional repressor FabR (Citrobacter koseri (strain ATCC BAA-895 / CDC 4225-83 / SGSC4696)).